The sequence spans 334 residues: MIEADRLIAPENPAFRDEDVIDRAIRPKKLADYQGQDHVRDQMEIFIKAAQLRNEALDHLLIFGPPGLGKTTLANIVANEMGVNIRTTSGPVLEKAGDLAALLTNLEENDVLFIDEIHRLSPMVEEVLYPAMEDYQLDIMIGEGPAARSIKIDLPPFTLIGATTRAGSLTSPLRDRFGITQRLEYYKIPDLQNIVQRSADCLGLSMEAEGALEVARRARGTPRIANRLLRRVRDFAEVKGNGHICADTADKALNMLDVDSKGFDYMDRKLLLAIMEKFGGGPVGLDNMAAAIGEEKDTIEDVLEPYLIQQGYLQRTPRGRIATDRAYLHFGIEK.

A large ATPase domain (RuvB-L) region spans residues 4–186; the sequence is ADRLIAPENP…FGITQRLEYY (183 aa). ATP is bound by residues I25, R26, G67, K70, T71, T72, 133 to 135, R176, Y186, and R223; that span reads EDY. T71 provides a ligand contact to Mg(2+). The small ATPAse domain (RuvB-S) stretch occupies residues 187 to 257; the sequence is KIPDLQNIVQ…TADKALNMLD (71 aa). The head domain (RuvB-H) stretch occupies residues 260–334; the sequence is SKGFDYMDRK…RAYLHFGIEK (75 aa). 2 residues coordinate DNA: R315 and R320.

This sequence belongs to the RuvB family. As to quaternary structure, homohexamer. Forms an RuvA(8)-RuvB(12)-Holliday junction (HJ) complex. HJ DNA is sandwiched between 2 RuvA tetramers; dsDNA enters through RuvA and exits via RuvB. An RuvB hexamer assembles on each DNA strand where it exits the tetramer. Each RuvB hexamer is contacted by two RuvA subunits (via domain III) on 2 adjacent RuvB subunits; this complex drives branch migration. In the full resolvosome a probable DNA-RuvA(4)-RuvB(12)-RuvC(2) complex forms which resolves the HJ.

It is found in the cytoplasm. It carries out the reaction ATP + H2O = ADP + phosphate + H(+). In terms of biological role, the RuvA-RuvB-RuvC complex processes Holliday junction (HJ) DNA during genetic recombination and DNA repair, while the RuvA-RuvB complex plays an important role in the rescue of blocked DNA replication forks via replication fork reversal (RFR). RuvA specifically binds to HJ cruciform DNA, conferring on it an open structure. The RuvB hexamer acts as an ATP-dependent pump, pulling dsDNA into and through the RuvAB complex. RuvB forms 2 homohexamers on either side of HJ DNA bound by 1 or 2 RuvA tetramers; 4 subunits per hexamer contact DNA at a time. Coordinated motions by a converter formed by DNA-disengaged RuvB subunits stimulates ATP hydrolysis and nucleotide exchange. Immobilization of the converter enables RuvB to convert the ATP-contained energy into a lever motion, pulling 2 nucleotides of DNA out of the RuvA tetramer per ATP hydrolyzed, thus driving DNA branch migration. The RuvB motors rotate together with the DNA substrate, which together with the progressing nucleotide cycle form the mechanistic basis for DNA recombination by continuous HJ branch migration. Branch migration allows RuvC to scan DNA until it finds its consensus sequence, where it cleaves and resolves cruciform DNA. In Vibrio vulnificus (strain YJ016), this protein is Holliday junction branch migration complex subunit RuvB.